A 326-amino-acid polypeptide reads, in one-letter code: Zinc-dependent endopolyphosphatase (326 aa).

Over 1-9 (MEDKRKRRA) the chain is Cytoplasmic. A helical membrane pass occupies residues 10 to 30 (ATLSTALILFVACCVYTLYIF). Topologically, residues 31-326 (KFDNPRLSPP…DYELIQVQCS (296 aa)) are vacuolar. N-linked (GlcNAc...) asparagine glycosylation is found at Asn90 and Asn241.

Belongs to the metallophosphoesterase superfamily. In terms of assembly, interacts with PPN1. Zn(2+) is required as a cofactor. Requires Co(2+) as cofactor. The cofactor is Mg(2+).

The protein resides in the vacuole membrane. The enzyme catalyses [phosphate](n+1) + n H2O = (n+1) phosphate + n H(+). Its activity is regulated as follows. Not sensitive to heparin inhibition. In terms of biological role, catalyzes the hydrolysis of inorganic polyphosphate (polyP) chains of many hundreds of phosphate residues into shorter lengths. Exclusively shows endopolyphosphatase activity, cleaving inside the polyP chain. Together with PPN1, responsible for a substantial fraction of polyphosphatase activity that is necessary to mobilize polyP stores in response to phosphate scarcity. The chain is Zinc-dependent endopolyphosphatase from Saccharomyces cerevisiae (strain ATCC 204508 / S288c) (Baker's yeast).